Here is a 301-residue protein sequence, read N- to C-terminus: Ribonuclease HIII (301 aa).

In terms of domain architecture, RNase H type-2 spans 88-301 (RPRIGVDESG…TFYEVLGSTS (214 aa)). Asp-94, Glu-95, and Asp-198 together coordinate a divalent metal cation.

It belongs to the RNase HII family. RnhC subfamily. The cofactor is Mn(2+). Requires Mg(2+) as cofactor.

Its subcellular location is the cytoplasm. The enzyme catalyses Endonucleolytic cleavage to 5'-phosphomonoester.. In terms of biological role, endonuclease that specifically degrades the RNA of RNA-DNA hybrids. This Chlamydia muridarum (strain MoPn / Nigg) protein is Ribonuclease HIII (rnhC).